The following is a 257-amino-acid chain: Probable enoyl-CoA hydratase echA8 (257 aa).

Belongs to the enoyl-CoA hydratase/isomerase family.

It catalyses the reaction a (3S)-3-hydroxyacyl-CoA = a (2E)-enoyl-CoA + H2O. It carries out the reaction a 4-saturated-(3S)-3-hydroxyacyl-CoA = a (3E)-enoyl-CoA + H2O. In terms of biological role, could possibly oxidize fatty acids using specific components. The sequence is that of Probable enoyl-CoA hydratase echA8 (echA8) from Mycobacterium tuberculosis (strain CDC 1551 / Oshkosh).